Consider the following 462-residue polypeptide: Tryptophan dimethylallyltransferase ifgA (462 aa).

L-tryptophan is bound by residues 83–84 (IL) and E92. Residues R103, K189, and Y191 each contribute to the substrate site. L-tryptophan contacts are provided by Y193 and R246. The substrate site is built by R259, K261, Y263, Q345, and Y347.

The protein belongs to the tryptophan dimethylallyltransferase family. Homodimer.

The enzyme catalyses L-tryptophan + dimethylallyl diphosphate = 4-(3-methylbut-2-enyl)-L-tryptophan + diphosphate. It functions in the pathway alkaloid biosynthesis; ergot alkaloid biosynthesis. In terms of biological role, tryptophan dimethylallyltransferase; part of the gene cluster that mediates the biosynthesis of isofumigaclavines, fungal ergot alkaloids. The tryptophan dimethylallyltransferase ifgA catalyzes the first step of ergot alkaloid biosynthesis by condensing dimethylallyl diphosphate (DMAP) and tryptophan to form 4-dimethylallyl-L-tryptophan. The second step is catalyzed by the methyltransferase ifgB that methylates 4-dimethylallyl-L-tryptophan in the presence of S-adenosyl-L-methionine, resulting in the formation of N-methyl-dimethylallyl-L-tryptophan. The catalase ifgD and the FAD-dependent oxidoreductase ifgC then transform N-methyl-dimethylallyl-L-tryptophan to chanoclavine-I which is further oxidized by ifgE in the presence of NAD(+), resulting in the formation of chanoclavine-I aldehyde. The chanoclavine-I aldehyde reductases ifgG and/or fgaOx3 reduce chanoclavine-I aldehyde to dihydrochanoclavine-I aldehyde that spontaneously dehydrates to form 6,8-dimethyl-6,7-didehydroergoline. The festuclavine dehydrogenases ifgF1 and/or ifgF2 then catalyze the reduction of 6,8-dimethyl-6,7-didehydroergoline to form festuclavine. Hydrolysis of festuclavine by a yet undetermined cytochrome P450 monooxygenase (called ifgH) then leads to the formation of isofumigaclavine B which is in turn acetylated by ifgI to isofumigaclavine A. Penicillium roqueforti has interestingly at least two sets of genes for the consumption of chanoclavine-I aldehyde on three different loci, the OYEs ifgG/fgaOx3 and the festuclavine synthase homologs ifgF1/ifgF2. The reason for the duplication of these genes is unclear, probably to ensure the conversion of chanoclavine-I aldehyde by differential gene expression under various environmental conditions. This is Tryptophan dimethylallyltransferase ifgA from Penicillium roqueforti (strain FM164).